We begin with the raw amino-acid sequence, 1630 residues long: Separin (1630 aa).

Positions 1016–1037 are disordered; sequence SKHSTGLKLCDSPRSSSMTPRG. The region spanning 1443 to 1542 is the Peptidase C50 domain; it reads EDNISMILNP…SAAMKYYGKL (100 aa). Residue C1531 is part of the active site.

In terms of assembly, may bind calcium. Interacts with PDS1. Interacts with MCD1.

It localises to the nucleus. The protein resides in the cytoplasm. It is found in the cytoskeleton. The protein localises to the microtubule organizing center. Its subcellular location is the spindle pole body. It carries out the reaction All bonds known to be hydrolyzed by this endopeptidase have arginine in P1 and an acidic residue in P4. P6 is often occupied by an acidic residue or by a hydroxy-amino-acid residue, the phosphorylation of which enhances cleavage.. Its activity is regulated as follows. It is inactivated via its interaction with PDS1, which probably covers its active site. PDS1 degradation at anaphase, liberates it and triggers MCD1 cleavage. Functionally, caspase-like protease, which plays a central role in the chromosome segregation by cleaving the MCD1/SCC1 subunit of the cohesin complex at the onset of anaphase. During most of the cell cycle, it is inactivated by securin/PDS1 protein. It also promotes anaphase spindle elongation. A component of the FEAR (CDC14 early anaphase release) network which promotes CDC14 release from the nucleolus during early anaphase. Cleaves SLK19. The polypeptide is Separin (ESP1) (Saccharomyces cerevisiae (strain ATCC 204508 / S288c) (Baker's yeast)).